Consider the following 129-residue polypeptide: Large ribosomal subunit protein bL12 (129 aa).

This sequence belongs to the bacterial ribosomal protein bL12 family. As to quaternary structure, homodimer. Part of the ribosomal stalk of the 50S ribosomal subunit. Forms a multimeric L10(L12)X complex, where L10 forms an elongated spine to which 2 to 4 L12 dimers bind in a sequential fashion. Binds GTP-bound translation factors.

Its function is as follows. Forms part of the ribosomal stalk which helps the ribosome interact with GTP-bound translation factors. Is thus essential for accurate translation. The chain is Large ribosomal subunit protein bL12 from Solidesulfovibrio magneticus (strain ATCC 700980 / DSM 13731 / RS-1) (Desulfovibrio magneticus).